The chain runs to 663 residues: UvrABC system protein B (663 aa).

Residues 31–271 (DNIEGGEKAQ…EASIAKIQAE (241 aa)) form the Helicase ATP-binding domain. Residue 44 to 51 (GATGTGKT) participates in ATP binding. Residues 97-120 (YYDYYQPEAYVPSSDTYIEKDSSV) carry the Beta-hairpin motif. Residues 435–601 (QMDDLLGEIN…TIKKEIRDLI (167 aa)) enclose the Helicase C-terminal domain. The UVR domain maps to 627 to 662 (QEAIKKLQKQMHEAAELLDFELAAQIRDMVLELKSM).

This sequence belongs to the UvrB family. In terms of assembly, forms a heterotetramer with UvrA during the search for lesions. Interacts with UvrC in an incision complex.

It localises to the cytoplasm. The UvrABC repair system catalyzes the recognition and processing of DNA lesions. A damage recognition complex composed of 2 UvrA and 2 UvrB subunits scans DNA for abnormalities. Upon binding of the UvrA(2)B(2) complex to a putative damaged site, the DNA wraps around one UvrB monomer. DNA wrap is dependent on ATP binding by UvrB and probably causes local melting of the DNA helix, facilitating insertion of UvrB beta-hairpin between the DNA strands. Then UvrB probes one DNA strand for the presence of a lesion. If a lesion is found the UvrA subunits dissociate and the UvrB-DNA preincision complex is formed. This complex is subsequently bound by UvrC and the second UvrB is released. If no lesion is found, the DNA wraps around the other UvrB subunit that will check the other stand for damage. This Streptococcus uberis (strain ATCC BAA-854 / 0140J) protein is UvrABC system protein B.